The sequence spans 215 residues: Glutathione S-transferase stcT (215 aa).

In terms of domain architecture, GST N-terminal spans 2–82; that stretch reads PFGTLYTRPF…YDSNTTLLGT (81 aa). Glutathione is bound by residues Lys52 and Glu66. Substrate is bound at residue Lys52. In terms of domain architecture, GST C-terminal spans 83 to 211; the sequence is TGQEYASIIR…PVLAEYEMPI (129 aa).

It belongs to the GST superfamily. Glutathione is required as a cofactor.

The protein operates within mycotoxin biosynthesis; sterigmatocystin biosynthesis. In terms of biological role, glutathione S-transferase; part of the gene cluster that mediates the biosynthesis of sterigmatocystin (ST), a polyketide-derived furanocoumarin which is part of the most toxic and carcinogenic compounds among the known mycotoxins. The first step in the biosynthesis of sterigmatocystin is the production of hexanoate by the fatty acid synthase (FAS) units stcJ and stcK. The polyketide backbone is assembled by the non-reducing polyketide synthase stcA by condensation of the starter hexanoyl-CoA and 7 malonyl-CoA extender units followed by cyclization and release of norsolorinic acid. Norsolorinic acid is the first stable intermediate in the biosynthesis of sterigmatocystin and is converted into averantin (AVN) by the ketoreductase stcE which reduces the hexanoate ketone to an alcohol. Averantin is then oxidized into 5'-hydroxyaverantin (HAVN) by the cytochrome P450 monooxygenase stcF. 5'-hydroxyaverantin is further converted to 5'-oxyaverantin (OAVN) by the 5'-hydroxyaverantin dehydrogenase stcG. The next step is the conversion of OAVN into averufin (AVF) which is catalyzed by a yet to be identified enzyme. The cytochrome P450 monooxygenase stcB and the flavin-binding monooxygenase stcW are both required for the conversion of averufin to 1-hydroxyversicolorone. The esterase stcI probably catalyzes the formation of versiconal hemiacetal acetate from 1-hydroxyversicolorone. The oxydoreductase stcN then probably catalyzes the biosynthetic step from versiconal to versicolorin B (VERB). The next step is performed by the versicolorin B desaturase stcL to produce versicolorin A (VERA). The ketoreductase stcU and the cytochrome P450 monooxygenase stcS are involved in the conversion of versicolorin A to demethylsterigmatocystin. The Baeyer-Villiger oxidas stcQ and the reductase stcR might be involved in the biosynthetic step from versicolorin A to demethylsterigmatocystin. The final step in the biosynthesis of sterigmatocystin is the methylation of demethylsterigmatocystin catalyzed by the methyltransferase stcP. In Emericella nidulans (strain FGSC A4 / ATCC 38163 / CBS 112.46 / NRRL 194 / M139) (Aspergillus nidulans), this protein is Glutathione S-transferase stcT.